A 317-amino-acid chain; its full sequence is L-lactate dehydrogenase 1 (317 aa).

NAD(+) is bound by residues valine 17, aspartate 38, lysine 43, tyrosine 69, and 83–84 (GA). Substrate-binding residues include glutamine 86 and arginine 92. Residues serine 105, 122 to 124 (ATN), and serine 147 each bind NAD(+). 124–127 (NPVD) contributes to the substrate binding site. 152–155 (DSAR) serves as a coordination point for substrate. Residue histidine 179 is the Proton acceptor of the active site. Position 223 is a phosphotyrosine (tyrosine 223). Threonine 232 serves as a coordination point for substrate.

The protein belongs to the LDH/MDH superfamily. LDH family. In terms of assembly, homotetramer.

The protein localises to the cytoplasm. It catalyses the reaction (S)-lactate + NAD(+) = pyruvate + NADH + H(+). It participates in fermentation; pyruvate fermentation to lactate; (S)-lactate from pyruvate: step 1/1. In terms of biological role, catalyzes the conversion of lactate to pyruvate (Potential). Appears to be the primary factor that allows S.aureus growth during nitrosative stress in both aerobically and anaerobically cultured cells. The protein is L-lactate dehydrogenase 1 of Staphylococcus aureus (strain bovine RF122 / ET3-1).